Reading from the N-terminus, the 370-residue chain is Phosphoserine aminotransferase (370 aa).

Residue M1 is modified to N-acetylmethionine. H44 and R45 together coordinate O-phospho-L-serine. An N6-acetyllysine modification is found at K51. Pyridoxal 5'-phosphate contacts are provided by G79, C80, and W107. K127 carries the post-translational modification N6-acetyllysine. 3 residues coordinate pyridoxal 5'-phosphate: T156, D176, and Q199. Position 200 is an N6-(pyridoxal phosphate)lysine (K200). Pyridoxal 5'-phosphate-binding residues include N241 and T242. Residues K269, K318, and K323 each carry the N6-acetyllysine modification. Position 331 is a phosphoserine (S331). The residue at position 333 (K333) is an N6-acetyllysine. 3 residues coordinate O-phospho-L-serine: H335, R336, and R342.

The protein belongs to the class-V pyridoxal-phosphate-dependent aminotransferase family. SerC subfamily. Homodimer. Pyridoxal 5'-phosphate is required as a cofactor. Expressed at high levels in the brain, liver, kidney and pancreas, and very weakly expressed in the thymus, prostate, testis and colon.

The enzyme catalyses O-phospho-L-serine + 2-oxoglutarate = 3-phosphooxypyruvate + L-glutamate. Its pathway is amino-acid biosynthesis; L-serine biosynthesis; L-serine from 3-phospho-D-glycerate: step 2/3. Its activity is regulated as follows. Phosphoserine transaminase activity is strongly stimulated by increasing the ionic strength. Functionally, involved in L-serine biosynthesis via the phosphorylated pathway, a three-step pathway converting the glycolytic intermediate 3-phospho-D-glycerate into L-serine. Catalyzes the second step, that is the pyridoxal 5'-phosphate-dependent transamination of 3-phosphohydroxypyruvate and L-glutamate to O-phosphoserine (OPS) and alpha-ketoglutarate. This is Phosphoserine aminotransferase from Homo sapiens (Human).